Here is a 239-residue protein sequence, read N- to C-terminus: Uridylate kinase (239 aa).

12-15 (KLSG) contributes to the ATP binding site. The interval 20 to 25 (GDQGAG) is involved in allosteric activation by GTP. Glycine 54 is a binding site for UMP. ATP is bound by residues glycine 55 and arginine 59. Residues aspartate 74 and 135–142 (TGNPFFTT) each bind UMP. ATP contacts are provided by threonine 162, tyrosine 168, and aspartate 171.

Belongs to the UMP kinase family. As to quaternary structure, homohexamer.

The protein resides in the cytoplasm. The catalysed reaction is UMP + ATP = UDP + ADP. The protein operates within pyrimidine metabolism; CTP biosynthesis via de novo pathway; UDP from UMP (UMPK route): step 1/1. Its activity is regulated as follows. Allosterically activated by GTP. Inhibited by UTP. Its function is as follows. Catalyzes the reversible phosphorylation of UMP to UDP. This Methylococcus capsulatus (strain ATCC 33009 / NCIMB 11132 / Bath) protein is Uridylate kinase.